Reading from the N-terminus, the 504-residue chain is Putative arrestin-related trafficking adapter SPBC839.02 (504 aa).

Residues 481 to 504 (QAPPPKYDDIFQSGSSHDENHDDN) are disordered.

It belongs to the ALY1 family.

Its function is as follows. May regulate endocytosis in response to extracellular stimuli. In Schizosaccharomyces pombe (strain 972 / ATCC 24843) (Fission yeast), this protein is Putative arrestin-related trafficking adapter SPBC839.02.